The chain runs to 458 residues: Exodeoxyribonuclease 7 large subunit (458 aa).

It belongs to the XseA family. In terms of assembly, heterooligomer composed of large and small subunits.

The protein localises to the cytoplasm. The enzyme catalyses Exonucleolytic cleavage in either 5'- to 3'- or 3'- to 5'-direction to yield nucleoside 5'-phosphates.. Its function is as follows. Bidirectionally degrades single-stranded DNA into large acid-insoluble oligonucleotides, which are then degraded further into small acid-soluble oligonucleotides. The sequence is that of Exodeoxyribonuclease 7 large subunit from Yersinia pseudotuberculosis serotype O:1b (strain IP 31758).